The chain runs to 588 residues: Phomenoic acid biosynthesis cluster cytochrome P450 monooxygenase (588 aa).

A signal peptide spans 1-21 (MSFARIFITILLLFILRRAFK). Asn-293 is a glycosylation site (N-linked (GlcNAc...) asparagine). Basic and acidic residues predominate over residues 467–486 (HQSDPDRFKPSPDAPDEKLF). The tract at residues 467–490 (HQSDPDRFKPSPDAPDEKLFRPSR) is disordered. Residue Cys-519 coordinates heme.

It belongs to the cytochrome P450 family. The cofactor is heme.

It participates in secondary metabolite biosynthesis. In terms of biological role, cytochrome P450 monooxygenase; part of the gene cluster that mediates the biosynthesis of phomenoic acid, a long chain aliphatic carboxylic acid that does not appear to be essential for pathogenicity but may play a role in allowing to outcompete other fungi in the environmental niche via its antifungal properties. The polyketide synthase produces the long methylated aliphatic carboxylic acid chain of phomenoic acid. The cluster-specific cytochrome P450 monooxygenase may then hydroxylate the methyl group of carbon 31. The putative dehydrogenase YogA, which has no obvious role in phomenoic acid biosynthesis, may further modify phomenoic acid to produce a compound not identified yet. This is Phomenoic acid biosynthesis cluster cytochrome P450 monooxygenase from Leptosphaeria maculans (strain JN3 / isolate v23.1.3 / race Av1-4-5-6-7-8) (Blackleg fungus).